Reading from the N-terminus, the 507-residue chain is Monocarboxylate transporter 9 (507 aa).

Over 1-12 the chain is Extracellular; that stretch reads MVYRKPPDGGWG. Residues 13–33 traverse the membrane as a helical segment; it reads WVIVIVSFFTQFLCYGSPLAV. The Cytoplasmic segment spans residues 34–52; the sequence is GVLYLEWLDAFGEGKGKTA. The chain crosses the membrane as a helical span at residues 53-73; it reads WVGSLANGIGLLASPVCSICV. Over 74 to 79 the chain is Extracellular; it reads SSFGAR. The helical transmembrane segment at 80–100 threads the bilayer; it reads PVAIFSGFMVAGGLMMSSFAP. The Cytoplasmic portion of the chain corresponds to 101–102; the sequence is NI. A helical transmembrane segment spans residues 103 to 123; it reads YFLYLSYGIVVGLGCGLLYNA. The Extracellular portion of the chain corresponds to 124–136; it reads TVTITCQYFDKRR. A helical transmembrane segment spans residues 137-157; the sequence is GLALGLISTGSSVGLFIYAAL. Topologically, residues 158–163 are cytoplasmic; the sequence is QRELIE. Residues 164–184 traverse the membrane as a helical segment; the sequence is LYGLDGCLLIVGALSLNILAC. Residues 185–302 lie on the Extracellular side of the membrane; it reads GSLMRPLESS…EETVVLFKNR (118 aa). The helical transmembrane segment at 303 to 323 threads the bilayer; the sequence is VFSALFFAILLFDIGGFPPSL. Residues 324–340 are Cytoplasmic-facing; that stretch reads LMEDIARSANINEEDYH. A helical transmembrane segment spans residues 341 to 361; that stretch reads MPLVSIIGIMTAIGKLILGIL. At 362 to 369 the chain is on the extracellular side; it reads ADFKWVNT. Residues 370-390 traverse the membrane as a helical segment; it reads LYLYVLTLLMMGAALLAIPFA. The Cytoplasmic portion of the chain corresponds to 391–395; the sequence is RSYFT. A helical transmembrane segment spans residues 396–416; the sequence is LAVLSGILGFLTGNWSIFPYV. Residues 417–430 lie on the Extracellular side of the membrane; it reads TTKTVGIEKLTHAY. Residues 431–451 traverse the membrane as a helical segment; it reads GILMFFAGLGNSLGPPIVGWF. Residues 452–460 lie on the Cytoplasmic side of the membrane; the sequence is YDWTQEYDT. Residues 461–481 form a helical membrane-spanning segment; sequence AFYFSGFCVLLGGFLLLLAAL. The Extracellular portion of the chain corresponds to 482-507; the sequence is PCWNACTDRSSKLPPNTYSYKVASSA.

The protein belongs to the major facilitator superfamily. Monocarboxylate porter (TC 2.A.1.13) family.

The protein resides in the cell membrane. The catalysed reaction is creatine(in) = creatine(out). It carries out the reaction (R)-carnitine(in) = (R)-carnitine(out). In terms of biological role, extracellular pH-and Na(+)-sensitive low-affinity creatine transporter. Also functions as a pH-independent carnitine efflux transporter. The protein is Monocarboxylate transporter 9 (SLC16A9) of Gallus gallus (Chicken).